The sequence spans 385 residues: Queuine tRNA-ribosyltransferase (385 aa).

The Proton acceptor role is filled by Asp-92. Residues 92–96, Asp-146, Gln-188, and Gly-215 contribute to the substrate site; that span reads DSGGF. Residues 246–252 are RNA binding; sequence GVGHPED. The Nucleophile role is filled by Asp-265. The segment at 270–274 is RNA binding; important for wobble base 34 recognition; the sequence is TRTGR. The Zn(2+) site is built by Cys-303, Cys-305, Cys-308, and His-334.

The protein belongs to the queuine tRNA-ribosyltransferase family. As to quaternary structure, homodimer. Within each dimer, one monomer is responsible for RNA recognition and catalysis, while the other monomer binds to the replacement base PreQ1. Requires Zn(2+) as cofactor.

The enzyme catalyses 7-aminomethyl-7-carbaguanine + guanosine(34) in tRNA = 7-aminomethyl-7-carbaguanosine(34) in tRNA + guanine. Its pathway is tRNA modification; tRNA-queuosine biosynthesis. In terms of biological role, catalyzes the base-exchange of a guanine (G) residue with the queuine precursor 7-aminomethyl-7-deazaguanine (PreQ1) at position 34 (anticodon wobble position) in tRNAs with GU(N) anticodons (tRNA-Asp, -Asn, -His and -Tyr). Catalysis occurs through a double-displacement mechanism. The nucleophile active site attacks the C1' of nucleotide 34 to detach the guanine base from the RNA, forming a covalent enzyme-RNA intermediate. The proton acceptor active site deprotonates the incoming PreQ1, allowing a nucleophilic attack on the C1' of the ribose to form the product. After dissociation, two additional enzymatic reactions on the tRNA convert PreQ1 to queuine (Q), resulting in the hypermodified nucleoside queuosine (7-(((4,5-cis-dihydroxy-2-cyclopenten-1-yl)amino)methyl)-7-deazaguanosine). The sequence is that of Queuine tRNA-ribosyltransferase from Thermus thermophilus (strain ATCC BAA-163 / DSM 7039 / HB27).